The chain runs to 131 residues: uncharacterized protein (131 aa).

The next 2 helical transmembrane spans lie at Leu52–Val72 and Ser97–Gly117.

It localises to the membrane. This is an uncharacterized protein from Acanthamoeba polyphaga mimivirus (APMV).